The sequence spans 229 residues: Galactonate operon transcriptional repressor (229 aa).

An HTH gntR-type domain is found at 1 to 71 (MTLNKTDRIV…RYRGAFVAPR (71 aa)). The segment at residues 31-50 (EAELCEEFATSRNIIREVFR) is a DNA-binding region (H-T-H motif). Zn(2+) contacts are provided by Asp-146, His-150, and His-195.

Homodimer.

D-galactonate binds DgoR and induces a conformational change in the protein, which decreases its affinity for DNA and consequently derepresses transcription of the dgoRKADT operon. Functionally, involved in the regulation of D-galactonate metabolism. Represses the expression of the dgoRKADT operon by binding to two closely spaced inverted repeats in the cis-acting element, which overlap with the D-galactonate responsive dgo promoter. Employs a derepression mechanism using D-galactonate as a specific effector molecule. In Escherichia coli (strain K12), this protein is Galactonate operon transcriptional repressor.